We begin with the raw amino-acid sequence, 441 residues long: Probable membrane metalloprotease ARASP2, chloroplastic (441 aa).

Residues 1 to 84 (MLLNISSSPI…DFGSLESVLE (84 aa)) constitute a chloroplast transit peptide. Position 96 (His-96) interacts with Zn(2+). Glu-97 is an active-site residue. His-100 is a binding site for Zn(2+). The helical transmembrane segment at 171–191 (VIVVSAGIVANVIFAYAIIFT) threads the bilayer. Residues 196 to 249 (VGLPVQESFPGVLVPDVKSFSAASRDGLLPGDVILAVDGTELSNSGSDSVSKVV) form the PDZ domain. 2 consecutive transmembrane segments (helical) span residues 373 to 393 (LAVINLLPLPALDGGTLALIL) and 407 to 427 (VEQGIMSSGIMLVLFLGLFLI).

It belongs to the peptidase M50A family. Zn(2+) serves as cofactor.

It is found in the plastid. It localises to the chloroplast inner membrane. Metalloprotease essential for chloroplast and plant development. May be involved in regulated intramembrane proteolysis (RIP). In Arabidopsis thaliana (Mouse-ear cress), this protein is Probable membrane metalloprotease ARASP2, chloroplastic.